A 424-amino-acid chain; its full sequence is Na(+)/H(+) antiporter NhaA (424 aa).

A run of 11 helical transmembrane segments spans residues 23–43 (ILLI…LATL), 65–85 (VHLW…GLEI), 102–122 (LPFI…MFFV), 131–151 (GWAI…ALLG), 160–180 (LFLV…IALF), 183–203 (AKIN…MFAC), 211–231 (LLVY…SGVH), 265–285 (ALHP…NAGV), 303–323 (IAAG…WLAV), 341–361 (AVSM…SLAF), and 373–393 (IGIL…LRLA).

This sequence belongs to the NhaA Na(+)/H(+) (TC 2.A.33) antiporter family.

It is found in the cell inner membrane. It catalyses the reaction Na(+)(in) + 2 H(+)(out) = Na(+)(out) + 2 H(+)(in). Na(+)/H(+) antiporter that extrudes sodium in exchange for external protons. This Sphingopyxis alaskensis (strain DSM 13593 / LMG 18877 / RB2256) (Sphingomonas alaskensis) protein is Na(+)/H(+) antiporter NhaA.